The sequence spans 315 residues: Acyl transferase (315 aa).

Active-site charge relay system residues include serine 116, aspartate 213, and histidine 243.

Belongs to the LuxD family.

It functions in the pathway lipid metabolism; fatty acid reduction for biolumincescence. In terms of biological role, acyl transferase is part of the fatty acid reductase system required for aldehyde biosynthesis; it produces fatty acids for the luminescent reaction. The polypeptide is Acyl transferase (Photobacterium leiognathi).